The following is a 414-amino-acid chain: MTLRKRSAQTKMWESPVVSQGKPSLLELPLKESLPKDSGLKAVPSTHTLYVGHLNPQFSVPVLACLLRDTLERLELPVAREQIEVVRRPRNTYALVQVAAPKAVLASLPWRLQMALEEQLILKELTARGKELVLSEGLESLHHREQDDSGPSPSHSPGPSPGPSPGPSPGFRRPPLPQLADPPPNWGSAGRRQISQNRPSGVRSDSAIVHQKILGQEQLFQGAFLGSETRNMEFKRGGGEYLSLAFKHHVRRYVCAFLNSEGGSLLVGVEDSGLVQGIHCSHRDEDRTRLLVDSILQGFKPQVFPDAYTLTFIPVISTTMTSVPLKVLRLTVHTPKAQGEPQLYETDQGEVFLRRDGSIQGPLSVGAIQDWCRQKWTAELSKLEEKVDVLTLEKEQLQEQLRQRQTLSCSCCVL.

A disordered region spans residues 141-203 (LHHREQDDSG…ISQNRPSGVR (63 aa)). The segment covering 154–185 (SHSPGPSPGPSPGPSPGFRRPPLPQLADPPPN) has biased composition (pro residues). 268–275 (GVEDSGLV) contacts ATP. Positions 373 to 407 (RQKWTAELSKLEEKVDVLTLEKEQLQEQLRQRQTL) form a coiled coil.

Belongs to the Schlafen family. Subgroup I subfamily.

In Rattus norvegicus (Rat), this protein is Schlafen-like protein 1 (Slfnl1).